A 227-amino-acid chain; its full sequence is Cytochrome c oxidase subunit 2 (227 aa).

Residues 1-14 are Mitochondrial intermembrane-facing; sequence MAYPLQLGFQDATS. The chain crosses the membrane as a helical span at residues 15-45; it reads PVMEELLHFHDHTLMIIFLISSLVLYIIMLM. Residues 46–59 lie on the Mitochondrial matrix side of the membrane; the sequence is LTTKLIHTNMMNVQ. A helical membrane pass occupies residues 60 to 87; the sequence is EMEMIWTILPAIILILIALPSLHTLYMM. Topologically, residues 88–227 are mitochondrial intermembrane; it reads DEINNPLLTI…YFESWSASLA (140 aa). Cu cation is bound by residues histidine 161, cysteine 196, glutamate 198, cysteine 200, histidine 204, and methionine 207. Glutamate 198 serves as a coordination point for Mg(2+). A Phosphotyrosine modification is found at tyrosine 218.

This sequence belongs to the cytochrome c oxidase subunit 2 family. As to quaternary structure, component of the cytochrome c oxidase (complex IV, CIV), a multisubunit enzyme composed of 14 subunits. The complex is composed of a catalytic core of 3 subunits MT-CO1, MT-CO2 and MT-CO3, encoded in the mitochondrial DNA, and 11 supernumerary subunits COX4I, COX5A, COX5B, COX6A, COX6B, COX6C, COX7A, COX7B, COX7C, COX8 and NDUFA4, which are encoded in the nuclear genome. The complex exists as a monomer or a dimer and forms supercomplexes (SCs) in the inner mitochondrial membrane with NADH-ubiquinone oxidoreductase (complex I, CI) and ubiquinol-cytochrome c oxidoreductase (cytochrome b-c1 complex, complex III, CIII), resulting in different assemblies (supercomplex SCI(1)III(2)IV(1) and megacomplex MCI(2)III(2)IV(2)). Found in a complex with TMEM177, COA6, COX18, COX20, SCO1 and SCO2. Interacts with TMEM177 in a COX20-dependent manner. Interacts with COX20. Interacts with COX16. It depends on Cu cation as a cofactor.

The protein localises to the mitochondrion inner membrane. The catalysed reaction is 4 Fe(II)-[cytochrome c] + O2 + 8 H(+)(in) = 4 Fe(III)-[cytochrome c] + 2 H2O + 4 H(+)(out). Functionally, component of the cytochrome c oxidase, the last enzyme in the mitochondrial electron transport chain which drives oxidative phosphorylation. The respiratory chain contains 3 multisubunit complexes succinate dehydrogenase (complex II, CII), ubiquinol-cytochrome c oxidoreductase (cytochrome b-c1 complex, complex III, CIII) and cytochrome c oxidase (complex IV, CIV), that cooperate to transfer electrons derived from NADH and succinate to molecular oxygen, creating an electrochemical gradient over the inner membrane that drives transmembrane transport and the ATP synthase. Cytochrome c oxidase is the component of the respiratory chain that catalyzes the reduction of oxygen to water. Electrons originating from reduced cytochrome c in the intermembrane space (IMS) are transferred via the dinuclear copper A center (CU(A)) of subunit 2 and heme A of subunit 1 to the active site in subunit 1, a binuclear center (BNC) formed by heme A3 and copper B (CU(B)). The BNC reduces molecular oxygen to 2 water molecules using 4 electrons from cytochrome c in the IMS and 4 protons from the mitochondrial matrix. The polypeptide is Cytochrome c oxidase subunit 2 (MT-CO2) (Elephas maximus (Indian elephant)).